Here is a 148-residue protein sequence, read N- to C-terminus: EKC/KEOPS complex subunit Lage3 (148 aa).

The segment at 1 to 21 (MQTAHTGLSHTADGADGQTSR) is disordered.

This sequence belongs to the CTAG/PCC1 family. Component of the EKC/KEOPS complex composed of at least GON7, TP53RK, TPRKB, OSGEP and LAGE3; the whole complex dimerizes.

It localises to the cytoplasm. The protein resides in the nucleus. Component of the EKC/KEOPS complex that is required for the formation of a threonylcarbamoyl group on adenosine at position 37 (t(6)A37) in tRNAs that read codons beginning with adenine. The complex is probably involved in the transfer of the threonylcarbamoyl moiety of threonylcarbamoyl-AMP (TC-AMP) to the N6 group of A37. LAGE3 functions as a dimerization module for the complex. The chain is EKC/KEOPS complex subunit Lage3 from Mus musculus (Mouse).